Reading from the N-terminus, the 144-residue chain is Short-chain diamines transporter (144 aa).

4 consecutive transmembrane segments (helical) span residues 9-29 (IHAI…LSFI), 35-55 (EVTG…NMIF), 76-96 (ILHA…MIAY), and 103-123 (IDAF…TFIF).

The protein belongs to the proteobacterial antimicrobial compound efflux (PACE) (TC 2.A.117) family. In terms of assembly, exists in a monomer-homodimer equilibrium. The dimer is probably the functional form of the protein, and the assembly of the dimer is mediated by binding of chlorhexidine and promoted by high pH conditions.

It is found in the cell inner membrane. With respect to regulation, protonation/deprotonation of Glu-15 may play an important role in transporter function. Cadaverin transport is inhibited in the presence of CCCP. In terms of biological role, mediates the efflux of short-chain diamines when energized by an electrochemical gradient. Recognizes specifically the short-chain diamines cadaverine and putrescine as substrates, and promotes the active transport of these substrates in exchange for a cation. Protons are probably the primary source of energy for transport, however it was not possible to conclude with complete certainty that protons, rather than alternative cations such as Na(+) ions, are exchanged for substrates by AceI. In addition, is involved in resistance to the synthetic biocide chlorhexidine, a widely used antiseptic and disinfectant in both hospital and community settings. Interacts directly with chlorhexidine and mediates its efflux via an energy-dependent mechanism. This Acinetobacter baumannii (strain ATCC 17978 / DSM 105126 / CIP 53.77 / LMG 1025 / NCDC KC755 / 5377) protein is Short-chain diamines transporter.